A 413-amino-acid chain; its full sequence is Transcription factor E2F4 (413 aa).

Residues 1 to 20 (MAEAGPQAPPPPGTPSRHEK) form a disordered region. Ala2 carries the post-translational modification N-acetylalanine. The DNA-binding element occupies 16–85 (SRHEKSLGLL…KNSIQWKGVG (70 aa)). Positions 43–65 (LKLAADTLAVRQKRRIYDITNVL) are leucine-zipper. The short motif at 48–85 (DTLAVRQKRRIYDITNVLEGIGLIEKKSKNSIQWKGVG) is the DEF box element. Residues 86 to 181 (PGCNTREIAD…GLNGQKKYQI (96 aa)) form a dimerization region. Positions 211 to 340 (PPEDLLQSPS…PSTSFEPIKA (130 aa)) are disordered. 2 stretches are compositionally biased toward polar residues: residues 234-249 (AQSQ…QLTP) and 293-306 (TLDT…ALLD). The span at 307 to 327 (SSSSSSSSSSSSSNSNSSSSS) shows a compositional bias: low complexity. A transactivation region spans residues 337-413 (PIKADPTGVL…DLFDVPVLNL (77 aa)). The residue at position 384 (Ser384) is a Phosphoserine. The HCFC1-binding-motif (HBM) signature appears at 389–392 (DHDY). The interaction with RBL1 and RBL2 stretch occupies residues 390-407 (HDYIYNLDESEGVCDLFD).

This sequence belongs to the E2F/DP family. Component of the DRTF1/E2F transcription factor complex. Binds cooperatively with TFDP1/Dp-1 to E2F sites. The E2F4/TFDP1 dimer interacts preferentially with pocket protein RBL1, which inhibits the E2F transactivation domain. Lower affinity interaction has been found with retinoblastoma protein RB1. Interacts with TRRAP, which probably mediates its interaction with histone acetyltransferase complexes, leading to transcription activation. Interacts with HCFC1. Component of the DREAM complex (also named LINC complex) at least composed of E2F4, E2F5, LIN9, LIN37, LIN52, LIN54, MYBL1, MYBL2, RBL1, RBL2, RBBP4, TFDP1 and TFDP2. The complex exists in quiescent cells where it represses cell cycle-dependent genes. It dissociates in S phase when LIN9, LIN37, LIN52 and LIN54 form a subcomplex that binds to MYBL2. Interacts with PML (isoform PML-1, isoform PML-2, isoform PML-3, isoform PML-4 and isoform PML-5). Interacts with CEBPA (when phosphorylated). In terms of processing, differentially phosphorylated in vivo. In terms of tissue distribution, found in all tissue examined including heart, brain, placenta, lung, liver, skeletal muscle, kidney and pancreas.

Its subcellular location is the nucleus. In terms of biological role, transcription activator that binds DNA cooperatively with DP proteins through the E2 recognition site, 5'-TTTC[CG]CGC-3' found in the promoter region of a number of genes whose products are involved in cell cycle regulation or in DNA replication. The DRTF1/E2F complex functions in the control of cell-cycle progression from G1 to S phase. E2F4 binds with high affinity to RBL1 and RBL2. In some instances can also bind RB1. Specifically required for multiciliate cell differentiation: together with MCIDAS and E2F5, binds and activate genes required for centriole biogenesis. The sequence is that of Transcription factor E2F4 (E2F4) from Homo sapiens (Human).